Consider the following 205-residue polypeptide: Inactive ribonuclease-like protein 9 (205 aa).

Positions 1 to 24 are cleaved as a signal peptide; it reads MMLITTHSLLLLLLLLQLLQPLQF. Cystine bridges form between C97-C152, C115-C167, and C122-C129. 2 N-linked (GlcNAc...) asparagine glycosylation sites follow: N130 and N142.

This sequence belongs to the pancreatic ribonuclease family.

It is found in the secreted. In terms of biological role, does not exhibit any ribonuclease activity. The protein is Inactive ribonuclease-like protein 9 (RNASE9) of Cebus capucinus (White-faced sapajou).